The chain runs to 906 residues: Gamma-tubulin complex component 3 homolog (906 aa).

The span at 208–229 shows a compositional bias: polar residues; sequence GQQPSQQSTTTKGLPNTVSRNV. A disordered region spans residues 208 to 242; the sequence is GQQPSQQSTTTKGLPNTVSRNVPRTRREGDSSGSV.

Belongs to the TUBGCP family. As to quaternary structure, interacts with gamma-tubulin.

The protein localises to the cytoplasm. The protein resides in the cytoskeleton. It localises to the microtubule organizing center. Its subcellular location is the centrosome. Its function is as follows. Necessary for the recruitment of gamma-tubulin to the centrosome and for the formation of a functional centrosome. This Xenopus laevis (African clawed frog) protein is Gamma-tubulin complex component 3 homolog (tubgcp3).